Reading from the N-terminus, the 118-residue chain is Large ribosomal subunit protein bL20 (118 aa).

Belongs to the bacterial ribosomal protein bL20 family.

In terms of biological role, binds directly to 23S ribosomal RNA and is necessary for the in vitro assembly process of the 50S ribosomal subunit. It is not involved in the protein synthesizing functions of that subunit. This Sulfurovum sp. (strain NBC37-1) protein is Large ribosomal subunit protein bL20.